The following is a 106-amino-acid chain: Urease subunit beta (106 aa).

This sequence belongs to the urease beta subunit family. In terms of assembly, heterotrimer of UreA (gamma), UreB (beta) and UreC (alpha) subunits. Three heterotrimers associate to form the active enzyme.

The protein localises to the cytoplasm. The enzyme catalyses urea + 2 H2O + H(+) = hydrogencarbonate + 2 NH4(+). It participates in nitrogen metabolism; urea degradation; CO(2) and NH(3) from urea (urease route): step 1/1. The chain is Urease subunit beta from Synechococcus sp. (strain WH7805).